A 380-amino-acid chain; its full sequence is uncharacterized protein (380 aa).

Positions 1-18 (MALRHLALLAGLLVGVAS) are cleaved as a signal peptide. N-linked (GlcNAc...) asparagine glycans are attached at residues Asn104, Asn111, and Asn128. Residues 148-168 (LFLGTFFISSGLILSVAGFFY) traverse the membrane as a helical segment. Disordered stretches follow at residues 229 to 256 (PQTG…QGQG) and 336 to 380 (RFSG…ISNV). Residues 240-249 (PPLPGSPGDP) show a composition bias toward pro residues. Positions 356–366 (VRRERPLDRAT) are enriched in basic and acidic residues.

The protein resides in the membrane. This is an uncharacterized protein from Homo sapiens (Human).